The following is a 581-amino-acid chain: Dehydrocurvularin exporter (581 aa).

Polar residues predominate over residues 1–10 (MTDSPSLESN). The tract at residues 1-47 (MTDSPSLESNNKSDMDTPRPPASSHDEHDAAESVSEKQDSATTSPTG) is disordered. Residue asparagine 11 is glycosylated (N-linked (GlcNAc...) asparagine). The span at 24–39 (SHDEHDAAESVSEKQD) shows a compositional bias: basic and acidic residues. The next 14 helical transmembrane spans lie at 61–81 (LVMF…GIIA), 96–116 (DVGW…PLWG), 126–146 (WVYL…AAAP), 159–179 (GWGA…VAPP), 184–204 (LLIG…PVIG), 215–235 (WCFW…LLFL), 251–271 (IILN…VCLT), 288–308 (VIAT…VEWL), 330–350 (IFCL…PIYF), 363–383 (VNTL…GGAI), 392–412 (YELA…ILDV), 424–444 (VLFG…VQGF), 456–476 (IMVM…QSLF), and 527–547 (VFAF…LIPF). The tract at residues 552-581 (DHEKKPSKDAMASDEVKASEEVQQEKKVTV) is disordered. The segment covering 565-581 (DEVKASEEVQQEKKVTV) has biased composition (basic and acidic residues).

The protein belongs to the major facilitator superfamily. TCR/Tet family.

It is found in the cell membrane. Its function is as follows. Efflux pump that is probably involved in the export of dehydrocurvularin. The chain is Dehydrocurvularin exporter from Alternaria cinerariae.